Reading from the N-terminus, the 51-residue chain is Mitochondrial import receptor subunit TOM5 homolog (51 aa).

At Met-1 the chain carries N-acetylmethionine. Lys-10 is covalently cross-linked (Glycyl lysine isopeptide (Lys-Gly) (interchain with G-Cter in SUMO2)). Residues Ser-27–Leu-45 traverse the membrane as a helical segment.

It belongs to the Tom5 family. Forms part of the preprotein translocase complex of the outer mitochondrial membrane (TOM complex) which consists of at least 7 different proteins (TOMM5, TOMM6, TOMM7, TOMM20, TOMM22, TOMM40 and TOMM70).

It is found in the mitochondrion outer membrane. This Bos taurus (Bovine) protein is Mitochondrial import receptor subunit TOM5 homolog.